A 375-amino-acid chain; its full sequence is Probable 1-acyl-sn-glycerol-3-phosphate acyltransferase 5 (375 aa).

2 helical membrane passes run 21-41 (IICL…WGFL) and 57-77 (CVSF…EKIN). Residues 100–105 (HRTEVD) carry the HXXXXD motif motif. 2 consecutive transmembrane segments (helical) span residues 312–332 (YLIN…LTFF) and 337–357 (WFRI…HFNL).

It belongs to the 1-acyl-sn-glycerol-3-phosphate acyltransferase family. In terms of tissue distribution, widely expressed at low level.

Its subcellular location is the membrane. It catalyses the reaction a 1-acyl-sn-glycero-3-phosphate + an acyl-CoA = a 1,2-diacyl-sn-glycero-3-phosphate + CoA. Its pathway is phospholipid metabolism; CDP-diacylglycerol biosynthesis; CDP-diacylglycerol from sn-glycerol 3-phosphate: step 2/3. Its function is as follows. May convert lysophosphatidic acid (LPA) into phosphatidic acid by incorporating acyl moiety at the 2 position. Has no activity when expressed in bacteria or yeast. The polypeptide is Probable 1-acyl-sn-glycerol-3-phosphate acyltransferase 5 (LPAT5) (Arabidopsis thaliana (Mouse-ear cress)).